An 86-amino-acid polypeptide reads, in one-letter code: Small ribosomal subunit protein bS20 (86 aa).

The tract at residues 1 to 23 is disordered; sequence MANIKSSKKDSIKSRKKKKLNAS.

It belongs to the bacterial ribosomal protein bS20 family.

Binds directly to 16S ribosomal RNA. In Buchnera aphidicola subsp. Baizongia pistaciae (strain Bp), this protein is Small ribosomal subunit protein bS20.